A 384-amino-acid polypeptide reads, in one-letter code: DNA repair protein RAD51 homolog 2 (384 aa).

The interval 1–75 (MGSKKLKRVG…TAYGIKAQRS (75 aa)) is interaction with RAD51C. Position 108–115 (108–115 (GPPGCGKT)) interacts with ATP.

It belongs to the RecA family. RAD51 subfamily. Part of the BCDX2 complex consisting of RAD51B, RAD51C, RAD51D and XRCC2; the complex has a ring-like structure arranged into a flat disc around a central channel. The BCDX2 subcomplex RAD51B:RAD51C interacts with RAD51. Interacts with SWSAP1; involved in homologous recombination repair. Interacts with HELQ. Post-translationally, phosphorylated on tyrosine residues by BCR-ABL. As to expression, expressed in a wide range of tissues.

The protein resides in the nucleus. In terms of biological role, involved in the homologous recombination repair (HRR) pathway of double-stranded DNA breaks arising during DNA replication or induced by DNA-damaging agents. May promote the assembly of presynaptic RAD51 nucleoprotein filaments. Binds single-stranded DNA and double-stranded DNA and has DNA-dependent ATPase activity. Part of the RAD51 paralog protein complex BCDX2 which acts in the BRCA1-BRCA2-dependent HR pathway. Upon DNA damage, BCDX2 acts downstream of BRCA2 recruitment and upstream of RAD51 recruitment. BCDX2 binds predominantly to the intersection of the four duplex arms of the Holliday junction and to junction of replication forks. The BCDX2 complex was originally reported to bind single-stranded DNA, single-stranded gaps in duplex DNA and specifically to nicks in duplex DNA. The BCDX2 subcomplex RAD51B:RAD51C exhibits single-stranded DNA-dependent ATPase activity suggesting an involvement in early stages of the HR pathway. This Homo sapiens (Human) protein is DNA repair protein RAD51 homolog 2 (RAD51B).